The following is a 391-amino-acid chain: MVTVDEVRKAQRAEGPATVLAIGTATPPNCIDQSTYPDYYFRITNSEHKTELKEKFQRMCDKSMIKKRYMYLTEEILKENPSMCEYMAPSLDARQDMVVVEIPKLGKEAATKAIKEWGQPKSKITHLVFCTTSGVDMPGADYQLTKLLGLRPSVKRLMMYQQGCFAGGTVLRLAKDLAENNRGARVLVVCSEIXAVTFRGPSDTHLDSLVGQALFGDGAAAIIVGADPLPKIERPLFELVSAAQTILPDSDGAIDGHLREVGLTFHLLKDVPGLISKNIEKSLNEAFKPLDITDWNSLFWIAHPGGPAILDQVETKLGLKPEKLEATRHILSEYGNMSSACVLFILDEVRRKSATNGLKTTGEGLEWGVLFGFGPGLTVETVVLHSVGVTA.

Residue cysteine 164 is part of the active site.

This sequence belongs to the thiolase-like superfamily. Chalcone/stilbene synthases family. In terms of assembly, homodimer. Expressed in fruits.

It catalyses the reaction (E)-4-coumaroyl-CoA + 3 malonyl-CoA + 3 H(+) = 2',4,4',6'-tetrahydroxychalcone + 3 CO2 + 4 CoA. It participates in secondary metabolite biosynthesis; flavonoid biosynthesis. In terms of biological role, polyketide synthase producing naringenin chalcone. Can use p-coumaryl-CoA as substrate. The sequence is that of Polyketide synthase 5 (PKS5) from Rubus idaeus (Raspberry).